A 91-amino-acid polypeptide reads, in one-letter code: DNA-binding protein HRL18 (91 aa).

Belongs to the bacterial histone-like protein family.

Functionally, histone-like DNA-binding protein which is capable of wrapping DNA to stabilize it, and thus to prevent its denaturation under extreme environmental conditions. The protein is DNA-binding protein HRL18 of Rhizobium leguminosarum.